Consider the following 132-residue polypeptide: Ribosome-binding factor A (132 aa).

Belongs to the RbfA family. As to quaternary structure, monomer. Binds 30S ribosomal subunits, but not 50S ribosomal subunits or 70S ribosomes.

It localises to the cytoplasm. Functionally, one of several proteins that assist in the late maturation steps of the functional core of the 30S ribosomal subunit. Associates with free 30S ribosomal subunits (but not with 30S subunits that are part of 70S ribosomes or polysomes). Required for efficient processing of 16S rRNA. May interact with the 5'-terminal helix region of 16S rRNA. This Burkholderia vietnamiensis (strain G4 / LMG 22486) (Burkholderia cepacia (strain R1808)) protein is Ribosome-binding factor A.